A 258-amino-acid polypeptide reads, in one-letter code: MKIISAVAASSIALGAVSATTDHVSRMLVLGGAVVPSGTKTYTTGIRPTIDGDNFCGGSLISPTHVLTTTACLRGIKPPNWVSVGTHYLNGTHDGEQIKVVAAQNHTNFNSTSGSFDVALLTLEKPSRFKPVKLPAADDSDIVAGMWSKLVGWGYTGYPEKTKAYELQGVSLQVWDNEQCGQLYPVDDTMVCAGGVKGKDSCDGDTGGPLIKERGPGDEDDIVVGLVSWGSECGVGYPGVYSRVSKALEWINSITKGK.

Residues 1-19 form the signal peptide; that stretch reads MKIISAVAASSIALGAVSA. The Peptidase S1 domain occupies 29-256; that stretch reads VLGGAVVPSG…ALEWINSITK (228 aa). Cys56 and Cys72 form a disulfide bridge. Residues Asn90, Asn105, and Asn110 are each glycosylated (N-linked (GlcNAc...) asparagine). 2 disulfides stabilise this stretch: Cys180-Cys192 and Cys202-Cys233.

This sequence belongs to the peptidase S1 family. Forms an apoplastic complex with host endoglucanases in tomato leaves during P.infestans infection.

Its subcellular location is the secreted. Its function is as follows. Secreted effector that suppresses host plant glucan elicitor-mediated defense responses. Targets host endoglucanases and inhibits the endoglucanase-mediated release of elicitor-active glucan oligosaccharides from P.infestans cell walls. This is Glucanase inhibitor protein 3 from Phytophthora infestans (Potato late blight agent).